The following is a 226-amino-acid chain: MYTLIIPAAGQGKRMGAGKNKLFLLINEVPIIVHTLRAFEKDKACKNIIMAINEEERPYFEELMQKYPVEKPVQFIQGGAERQDSVYNAIQHTTDVEYVLVHDGARPFVTNKVIQDVLTAAEKYGASICAVPVKDTVKKVEQGVVVETVERSQLKAVQTPQGFSVSLLLEAHRSAKQSCFLGTDDASLVERIGKQVGVVEGSYYNIKVTTPEDLLIAESFLHVQKK.

The protein belongs to the IspD/TarI cytidylyltransferase family. IspD subfamily.

The catalysed reaction is 2-C-methyl-D-erythritol 4-phosphate + CTP + H(+) = 4-CDP-2-C-methyl-D-erythritol + diphosphate. It functions in the pathway isoprenoid biosynthesis; isopentenyl diphosphate biosynthesis via DXP pathway; isopentenyl diphosphate from 1-deoxy-D-xylulose 5-phosphate: step 2/6. Its function is as follows. Catalyzes the formation of 4-diphosphocytidyl-2-C-methyl-D-erythritol from CTP and 2-C-methyl-D-erythritol 4-phosphate (MEP). The sequence is that of 2-C-methyl-D-erythritol 4-phosphate cytidylyltransferase from Bacillus thuringiensis (strain Al Hakam).